A 523-amino-acid chain; its full sequence is Pentatricopeptide repeat-containing protein At3g21470 (523 aa).

PPR repeat units lie at residues 10–43, 44–79, 80–114, 115–141, 143–173, 176–210, 211–237, 238–272, 273–307, 308–338, 339–373, 374–408, and 409–439; these read GEFH…RGVY, FPGW…GVCS, DVMV…NVAT, WNAM…ISVC, NTVT…MPFE, NVKA…NAFV, WSLM…VFAR, DLVI…GYEP, DAVT…GIEL, NQFV…ISVR, SVAC…DLKP, DEIT…DVKP, and NVKH…MHVK. Residues 444–523 form a type E motif region; that stretch reads VLGALLGACK…SPGLSSLVLT (80 aa).

It belongs to the PPR family. PCMP-E subfamily.

This is Pentatricopeptide repeat-containing protein At3g21470 (PCMP-E29) from Arabidopsis thaliana (Mouse-ear cress).